Reading from the N-terminus, the 494-residue chain is Alpha-amylase B (494 aa).

A signal peptide spans 1–18 (MFLAKSIVCLALLAVANA). Q19 is subject to Pyrrolidone carboxylic acid. C46 and C102 are disulfide-bonded. Ca(2+)-binding residues include N116, R165, and D174. A disulfide bond links C153 and C167. R202 serves as a coordination point for chloride. The active-site Nucleophile is D204. H208 contacts Ca(2+). The Proton donor role is filled by E241. 2 residues coordinate chloride: N304 and R343. 2 disulfide bridges follow: C376/C382 and C448/C460.

This sequence belongs to the glycosyl hydrolase 13 family. Monomer. Ca(2+) serves as cofactor. The cofactor is chloride.

It catalyses the reaction Endohydrolysis of (1-&gt;4)-alpha-D-glucosidic linkages in polysaccharides containing three or more (1-&gt;4)-alpha-linked D-glucose units.. This chain is Alpha-amylase B (Amy-d), found in Drosophila melanogaster (Fruit fly).